Reading from the N-terminus, the 249-residue chain is Proteasome activator complex subunit 1 (249 aa).

The segment at 60–102 (PLDIPVPDPVKEKEKEERKKQQEKEDKDEKKKGEDEDKGPPCG) is disordered. A compositionally biased stretch (basic and acidic residues) spans 68 to 98 (PVKEKEKEERKKQQEKEDKDEKKKGEDEDKG).

The protein belongs to the PA28 family. In terms of assembly, heterodimer of PSME1 and PSME2, which forms a hexameric ring. PSME1 can form homoheptamers.

Functionally, implicated in immunoproteasome assembly and required for efficient antigen processing. The PA28 activator complex enhances the generation of class I binding peptides by altering the cleavage pattern of the proteasome. This chain is Proteasome activator complex subunit 1 (PSME1), found in Sus scrofa (Pig).